The chain runs to 79 residues: Pyridoxal 5'-phosphate synthase PDX1-like 4 (79 aa).

The protein belongs to the PdxS/SNZ family.

In Arabidopsis thaliana (Mouse-ear cress), this protein is Pyridoxal 5'-phosphate synthase PDX1-like 4 (PDX1L4).